Here is an 84-residue protein sequence, read N- to C-terminus: UPF0473 protein CLI_2624 (84 aa).

The protein belongs to the UPF0473 family.

The protein is UPF0473 protein CLI_2624 of Clostridium botulinum (strain Langeland / NCTC 10281 / Type F).